The sequence spans 317 residues: Melanocyte-stimulating hormone receptor (317 aa).

Over residues Met-1–Ala-20 the composition is skewed to polar residues. The interval Met-1 to His-23 is disordered. The Extracellular segment spans residues Met-1–Glu-37. N-linked (GlcNAc...) asparagine glycosylation is present at Asn-29. Residues Val-38 to Ile-63 form a helical membrane-spanning segment. Residues Ala-64–Pro-72 are Cytoplasmic-facing. A helical transmembrane segment spans residues Met-73–Leu-93. Topologically, residues Glu-94–Asn-118 are extracellular. The helical transmembrane segment at Val-119 to Met-140 threads the bilayer. Residues Asp-141 to Arg-163 lie on the Cytoplasmic side of the membrane. Residues Ala-164–Cys-183 traverse the membrane as a helical segment. Residues Asp-184 to Cys-191 are Extracellular-facing. Residues Leu-192 to Leu-211 traverse the membrane as a helical segment. Residues Thr-212 to Ala-240 lie on the Cytoplasmic side of the membrane. Residues Ala-241–Val-266 form a helical membrane-spanning segment. The Extracellular portion of the chain corresponds to Cys-267–Asn-279. Residues Phe-280–Phe-300 traverse the membrane as a helical segment. Residues Arg-301 to Trp-317 lie on the Cytoplasmic side of the membrane.

This sequence belongs to the G-protein coupled receptor 1 family. As to quaternary structure, interacts with MGRN1, but does not undergo MGRN1-mediated ubiquitination; this interaction competes with GNAS-binding and thus inhibits agonist-induced cAMP production. Interacts with OPN3; the interaction results in a decrease in MC1R-mediated cAMP signaling and ultimately a decrease in melanin production in melanocytes.

The protein resides in the cell membrane. Functionally, receptor for MSH (alpha, beta and gamma) and ACTH. The activity of this receptor is mediated by G proteins which activate adenylate cyclase. Mediates melanogenesis, the production of eumelanin (black/brown) and phaeomelanin (red/yellow), via regulation of cAMP signaling in melanocytes. The chain is Melanocyte-stimulating hormone receptor (MC1R) from Lemur catta (Ring-tailed lemur).